The primary structure comprises 227 residues: Probable septum site-determining protein MinC (227 aa).

It belongs to the MinC family. As to quaternary structure, interacts with MinD and FtsZ.

Cell division inhibitor that blocks the formation of polar Z ring septums. Rapidly oscillates between the poles of the cell to destabilize FtsZ filaments that have formed before they mature into polar Z rings. Prevents FtsZ polymerization. The sequence is that of Probable septum site-determining protein MinC from Shouchella clausii (strain KSM-K16) (Alkalihalobacillus clausii).